Reading from the N-terminus, the 54-residue chain is Large ribosomal subunit protein bL32c (54 aa).

Over residues Met-1–Trp-20 the composition is skewed to basic residues. The segment at Met-1–Asn-54 is disordered. Residues Ala-31–Lys-42 are compositionally biased toward low complexity.

This sequence belongs to the bacterial ribosomal protein bL32 family.

It localises to the plastid. The protein localises to the chloroplast. This chain is Large ribosomal subunit protein bL32c, found in Chlorokybus atmophyticus (Soil alga).